We begin with the raw amino-acid sequence, 422 residues long: Probable Na(+)/H(+) antiporter 2 (422 aa).

Helical transmembrane passes span 3 to 23, 28 to 48, 52 to 72, 93 to 113, 119 to 139, 157 to 177, 183 to 203, 216 to 236, 242 to 262, 281 to 301, 307 to 327, 341 to 361, and 384 to 404; these read IVLF…IAKI, GIPD…LNVI, IVES…LFIG, ILAL…VFHL, IGLL…IPIF, VFND…LGLA, ILEF…AGKF, YIAP…EGIF, YEIS…NVIV, LSIF…SIPL, LPAF…GVLI, IYLA…AMVY, and LAGT…VLEA.

The protein belongs to the monovalent cation:proton antiporter 1 (CPA1) transporter (TC 2.A.36) family.

The protein resides in the cell membrane. Its function is as follows. This is probably a Na(+)/H(+) antiporter. This Methanocaldococcus jannaschii (strain ATCC 43067 / DSM 2661 / JAL-1 / JCM 10045 / NBRC 100440) (Methanococcus jannaschii) protein is Probable Na(+)/H(+) antiporter 2.